Reading from the N-terminus, the 379-residue chain is Polycomb group protein FIE2 (379 aa).

WD repeat units follow at residues 85–128, 131–171, 177–217, 243–280, 292–333, and 340–378; these read DKDE…LAKS, GHGD…CILI, GHRN…LYVD, VHSN…QSPG, VPEC…PVLI, and QCKS…PSSR.

This sequence belongs to the WD repeat ESC family. As to expression, widely expressed. Expressed in the embryo sac before pollination. After pollination, its expression persists, predominantly in the embryo and at lower levels in the endosperm.

It is found in the nucleus. In terms of biological role, polycomb group (PcG) protein. PcG proteins act by forming multiprotein complexes, which are required to maintain the transcriptionally repressive state of homeotic genes throughout development. PcG proteins are not required to initiate repression, but to maintain it during later stages of development. They probably act via the methylation of histones, rendering chromatin heritably changed in its expressibility. The protein is Polycomb group protein FIE2 (FIE2) of Zea mays (Maize).